Here is a 37-residue protein sequence, read N- to C-terminus: Protein YnaM (37 aa).

Residues 4-24 (ILIITSLLIIFSIFSHALIKL) form a helical membrane-spanning segment.

The protein resides in the cell inner membrane. The sequence is that of Protein YnaM from Escherichia coli (strain K12).